A 579-amino-acid polypeptide reads, in one-letter code: 2-succinyl-5-enolpyruvyl-6-hydroxy-3-cyclohexene-1-carboxylate synthase (579 aa).

The protein belongs to the TPP enzyme family. MenD subfamily. In terms of assembly, homodimer. Requires Mg(2+) as cofactor. It depends on Mn(2+) as a cofactor. Thiamine diphosphate serves as cofactor.

The catalysed reaction is isochorismate + 2-oxoglutarate + H(+) = 5-enolpyruvoyl-6-hydroxy-2-succinyl-cyclohex-3-ene-1-carboxylate + CO2. The protein operates within quinol/quinone metabolism; 1,4-dihydroxy-2-naphthoate biosynthesis; 1,4-dihydroxy-2-naphthoate from chorismate: step 2/7. It functions in the pathway quinol/quinone metabolism; menaquinone biosynthesis. Catalyzes the thiamine diphosphate-dependent decarboxylation of 2-oxoglutarate and the subsequent addition of the resulting succinic semialdehyde-thiamine pyrophosphate anion to isochorismate to yield 2-succinyl-5-enolpyruvyl-6-hydroxy-3-cyclohexene-1-carboxylate (SEPHCHC). The chain is 2-succinyl-5-enolpyruvyl-6-hydroxy-3-cyclohexene-1-carboxylate synthase from Shewanella frigidimarina (strain NCIMB 400).